The primary structure comprises 337 residues: Lipoyl synthase (337 aa).

Positions 81, 86, 92, 107, 111, 114, and 323 each coordinate [4Fe-4S] cluster. The 220-residue stretch at 93-312 folds into the Radical SAM core domain; sequence FSHGTATFMI…EDYGNALGFS (220 aa).

The protein belongs to the radical SAM superfamily. Lipoyl synthase family. [4Fe-4S] cluster serves as cofactor.

It localises to the cytoplasm. It catalyses the reaction [[Fe-S] cluster scaffold protein carrying a second [4Fe-4S](2+) cluster] + N(6)-octanoyl-L-lysyl-[protein] + 2 oxidized [2Fe-2S]-[ferredoxin] + 2 S-adenosyl-L-methionine + 4 H(+) = [[Fe-S] cluster scaffold protein] + N(6)-[(R)-dihydrolipoyl]-L-lysyl-[protein] + 4 Fe(3+) + 2 hydrogen sulfide + 2 5'-deoxyadenosine + 2 L-methionine + 2 reduced [2Fe-2S]-[ferredoxin]. It functions in the pathway protein modification; protein lipoylation via endogenous pathway; protein N(6)-(lipoyl)lysine from octanoyl-[acyl-carrier-protein]: step 2/2. Functionally, catalyzes the radical-mediated insertion of two sulfur atoms into the C-6 and C-8 positions of the octanoyl moiety bound to the lipoyl domains of lipoate-dependent enzymes, thereby converting the octanoylated domains into lipoylated derivatives. The protein is Lipoyl synthase of Xanthomonas euvesicatoria pv. vesicatoria (strain 85-10) (Xanthomonas campestris pv. vesicatoria).